A 163-amino-acid polypeptide reads, in one-letter code: Large ribosomal subunit protein uL15 (163 aa).

This sequence belongs to the universal ribosomal protein uL15 family. In terms of assembly, part of the 50S ribosomal subunit.

Functionally, binds to the 23S rRNA. The sequence is that of Large ribosomal subunit protein uL15 from Orientia tsutsugamushi (strain Boryong) (Rickettsia tsutsugamushi).